We begin with the raw amino-acid sequence, 69 residues long: Ribosome modulation factor (69 aa).

It belongs to the ribosome modulation factor family.

It localises to the cytoplasm. During stationary phase, converts 70S ribosomes to an inactive dimeric form (100S ribosomes). This Marinomonas mediterranea (strain ATCC 700492 / JCM 21426 / NBRC 103028 / MMB-1) protein is Ribosome modulation factor.